Consider the following 371-residue polypeptide: Protein SPATA31F3 (371 aa).

Residues isoleucine 7–tryptophan 29 traverse the membrane as a helical segment. Residues leucine 62 to glutamine 86 are a coiled coil. Composition is skewed to polar residues over residues leucine 189–glutamine 203 and proline 244–serine 266. Disordered regions lie at residues leucine 189–glutamine 222, tyrosine 240–methionine 299, and tyrosine 326–isoleucine 371. Phosphoserine is present on residues serine 197 and serine 198. Positions glutamine 277–valine 287 are enriched in basic residues. Over residues threonine 330–alanine 362 the composition is skewed to basic and acidic residues.

This sequence belongs to the SPATA31 family.

The protein resides in the membrane. This is Protein SPATA31F3 (Spata31f3) from Mus musculus (Mouse).